A 645-amino-acid polypeptide reads, in one-letter code: Synaptotagmin-16 (645 aa).

3 disordered regions span residues 102 to 121 (AQNS…STMS), 144 to 192 (EHHL…DSDE), and 206 to 344 (QSFR…PSGV). The span at 167–177 (ETVNGKKQVNS) shows a compositional bias: polar residues. Residues 179–192 (GDDEELSTSSDSDE) show a composition bias toward acidic residues. Residues 287 to 303 (HQESSVVQSLRRQSTEG) show a composition bias toward polar residues. The C2 1 domain occupies 350–469 (KCGDLDVIFE…HPEGEMKVTL (120 aa)). The tract at residues 478 to 503 (SSGGSPLSPSAVSHSDSTSSTQSLSH) is disordered. Residues 485–502 (SPSAVSHSDSTSSTQSLS) are compositionally biased toward low complexity. The C2 2 domain occupies 505-640 (GAPELLVGLS…TKGQQICRWH (136 aa)).

It belongs to the synaptotagmin family. In terms of assembly, homodimer. Can also form heterodimers. As to expression, expressed in brain.

In terms of biological role, may be involved in the trafficking and exocytosis of secretory vesicles in non-neuronal tissues. Is Ca(2+)-independent. The protein is Synaptotagmin-16 (SYT16) of Homo sapiens (Human).